A 432-amino-acid chain; its full sequence is Ribosomal protein uS12 methylthiotransferase RimO (432 aa).

The region spanning 2-115 (IRVAVITLGC…LPEIINRVLK (114 aa)) is the MTTase N-terminal domain. Residues C11, C47, C78, C151, C155, and C158 each contribute to the [4Fe-4S] cluster site. The 231-residue stretch at 137–367 (EDGKPFAYLK…MLHQQSITRA (231 aa)) folds into the Radical SAM core domain.

It belongs to the methylthiotransferase family. RimO subfamily. [4Fe-4S] cluster is required as a cofactor.

The protein resides in the cytoplasm. It carries out the reaction L-aspartate(89)-[ribosomal protein uS12]-hydrogen + (sulfur carrier)-SH + AH2 + 2 S-adenosyl-L-methionine = 3-methylsulfanyl-L-aspartate(89)-[ribosomal protein uS12]-hydrogen + (sulfur carrier)-H + 5'-deoxyadenosine + L-methionine + A + S-adenosyl-L-homocysteine + 2 H(+). Its function is as follows. Catalyzes the methylthiolation of an aspartic acid residue of ribosomal protein uS12. This is Ribosomal protein uS12 methylthiotransferase RimO from Moorella thermoacetica (strain ATCC 39073 / JCM 9320).